Consider the following 136-residue polypeptide: Nucleoside diphosphate kinase (136 aa).

ATP is bound by residues Lys-10, Phe-58, Arg-86, Thr-92, Arg-104, and Asn-114. Catalysis depends on His-117, which acts as the Pros-phosphohistidine intermediate.

This sequence belongs to the NDK family. As to quaternary structure, homotetramer. The cofactor is Mg(2+).

It is found in the cytoplasm. The catalysed reaction is a 2'-deoxyribonucleoside 5'-diphosphate + ATP = a 2'-deoxyribonucleoside 5'-triphosphate + ADP. It catalyses the reaction a ribonucleoside 5'-diphosphate + ATP = a ribonucleoside 5'-triphosphate + ADP. Functionally, major role in the synthesis of nucleoside triphosphates other than ATP. The ATP gamma phosphate is transferred to the NDP beta phosphate via a ping-pong mechanism, using a phosphorylated active-site intermediate. This is Nucleoside diphosphate kinase from Corynebacterium efficiens (strain DSM 44549 / YS-314 / AJ 12310 / JCM 11189 / NBRC 100395).